A 156-amino-acid polypeptide reads, in one-letter code: MPRRRIVGQRKILPDPKFSSELLAKFINILMVSGKKSLSESIVYTALEILVQRSSKSHLDAFEAALNNVRPTVEVKSRRVGGSTYQVPIEVRPVRRNALAMRWIVEAARKRGDKSMALRLANELADAMEKKGSAVKKCEDVHRTAEANKAFAHYRW.

It belongs to the universal ribosomal protein uS7 family. Part of the 30S ribosomal subunit. Contacts proteins S9 and S11.

One of the primary rRNA binding proteins, it binds directly to 16S rRNA where it nucleates assembly of the head domain of the 30S subunit. Is located at the subunit interface close to the decoding center, probably blocks exit of the E-site tRNA. This is Small ribosomal subunit protein uS7 from Hamiltonella defensa subsp. Acyrthosiphon pisum (strain 5AT).